A 468-amino-acid chain; its full sequence is Mitochondrial distribution and morphology protein 10 (468 aa).

The protein belongs to the MDM10 family. Component of the ER-mitochondria encounter structure (ERMES) or MDM complex, composed of MMM1, MDM10, MDM12 and MDM34. Associates with the mitochondrial outer membrane sorting assembly machinery SAM(core) complex.

It is found in the mitochondrion outer membrane. Component of the ERMES/MDM complex, which serves as a molecular tether to connect the endoplasmic reticulum and mitochondria. Components of this complex are involved in the control of mitochondrial shape and protein biogenesis and may function in phospholipid exchange. MDM10 is involved in the late assembly steps of the general translocase of the mitochondrial outer membrane (TOM complex). Functions in the TOM40-specific route of the assembly of outer membrane beta-barrel proteins, including the association of TOM40 with the receptor TOM22 and small TOM proteins. Can associate with the SAM(core) complex as well as the MDM12-MMM1 complex, both involved in late steps of the major beta-barrel assembly pathway, that is responsible for biogenesis of all outer membrane beta-barrel proteins. May act as a switch that shuttles between both complexes and channels precursor proteins into the TOM40-specific pathway. Plays a role in mitochondrial morphology and in the inheritance of mitochondria. This chain is Mitochondrial distribution and morphology protein 10, found in Blastomyces gilchristii (strain SLH14081) (Blastomyces dermatitidis).